Consider the following 111-residue polypeptide: CRIB domain-containing protein RIC2 (111 aa).

A CRIB domain is found at 71 to 84; that stretch reads IGFPTDVKHLSHIG.

Interacts with ARAC11/ROP1. Expressed in roots, leaves, stems, flowers, siliques and pollen.

It is found in the cell membrane. Functions as a downstream effector of Rho-related GTP binding proteins of the 'Rho of Plants' (ROPs) family. Participates in the propagation of ROP GTPase signals in specific cellular responses. Is involved in pollen tube growth regulation through its interaction with ARAC11/ROP1. The sequence is that of CRIB domain-containing protein RIC2 (RIC2) from Arabidopsis thaliana (Mouse-ear cress).